Consider the following 633-residue polypeptide: Chaperone protein dnaK2 (633 aa).

Thr-197 carries the post-translational modification Phosphothreonine; by autocatalysis. The segment covering 513-532 (AEQNASSDKERREKIERKNQ) has biased composition (basic and acidic residues). 2 disordered regions span residues 513-534 (AEQN…NQAD) and 598-633 (QQAG…TETK). The segment covering 606–619 (PGAAPQDGGTTSSD) has biased composition (low complexity). The span at 620-633 (GGDDVIDADFTETK) shows a compositional bias: acidic residues.

The protein belongs to the heat shock protein 70 family.

Functionally, acts as a chaperone. In Nostoc sp. (strain PCC 7120 / SAG 25.82 / UTEX 2576), this protein is Chaperone protein dnaK2 (dnaK2).